The primary structure comprises 169 residues: Putative tRNA (cytidine(34)-2'-O)-methyltransferase (169 aa).

S-adenosyl-L-methionine-binding residues include Val79, Gly104, Ile125, and Ser134.

It belongs to the class IV-like SAM-binding methyltransferase superfamily. RNA methyltransferase TrmH family. TrmL subfamily.

The protein localises to the cytoplasm. The catalysed reaction is cytidine(34) in tRNA + S-adenosyl-L-methionine = 2'-O-methylcytidine(34) in tRNA + S-adenosyl-L-homocysteine + H(+). It carries out the reaction 5-carboxymethylaminomethyluridine(34) in tRNA(Leu) + S-adenosyl-L-methionine = 5-carboxymethylaminomethyl-2'-O-methyluridine(34) in tRNA(Leu) + S-adenosyl-L-homocysteine + H(+). Could methylate the ribose at the nucleotide 34 wobble position in tRNA. The protein is Putative tRNA (cytidine(34)-2'-O)-methyltransferase of Lactococcus lactis subsp. cremoris (strain MG1363).